The chain runs to 145 residues: uncharacterized protein (145 aa).

Residues 4–24 (IYMLVALLISSLVLFAGCVQN) form a helical membrane-spanning segment.

It is found in the membrane. This is an uncharacterized protein from Methanocaldococcus jannaschii (strain ATCC 43067 / DSM 2661 / JAL-1 / JCM 10045 / NBRC 100440) (Methanococcus jannaschii).